Here is a 288-residue protein sequence, read N- to C-terminus: MELLCCEVDPVRRAVPDRNLLEDRVLQNLLTIEERYLPQCSYFKCVQKDIQPYMRRMVATWMLEVCEEQKCEEEVFPLAMNYLDRFLAGVPTPKTHLQLLGAVCMFLASKLKETIPLTAEKLCIYTDNSVKPQELLEWELVVLGKLKWNLAAVTPHDFIEHILRKLPQQKEKLSLIRKHAQTFIALCATDFKFAMYPPSMIATGSVGAAICGLQQDEEVNALTCDALTELLTKITHTDVDCLKACQEQIEAVLLNSLQQFRQEQHNGSKSVEDPDQATTPTDVRDVDL.

The 126-residue stretch at 26–151 (LQNLLTIEER…VLGKLKWNLA (126 aa)) folds into the Cyclin N-terminal domain. A disordered region spans residues 264-288 (QHNGSKSVEDPDQATTPTDVRDVDL). Serine 270 carries the phosphoserine modification. Threonine 279 is modified (phosphothreonine).

This sequence belongs to the cyclin family. Cyclin D subfamily. As to quaternary structure, interacts with either CDK4 or CDK6 protein kinase to form a serine/threonine kinase holoenzyme complex. The cyclin subunit imparts substrate specificity to the complex. In terms of processing, phosphorylation at Thr-279 by MAP kinases is required for ubiquitination and degradation by the DCX(AMBRA1) complex. Post-translationally, ubiquitinated by the DCX(AMBRA1) complex during the transition from G1 to S cell phase, leading to its degradation: ubiquitination is dependent on Thr-279 phosphorylation. The DCX(AMBRA1) complex represents the major regulator of CCND2 stability during the G1/S transition. Polyubiquitinated by the SCF(FBXL2) complex, leading to proteasomal degradation.

The protein resides in the nucleus. It localises to the cytoplasm. It is found in the nucleus membrane. Its function is as follows. Regulatory component of the cyclin D2-CDK4 (DC) complex that phosphorylates and inhibits members of the retinoblastoma (RB) protein family including RB1 and regulates the cell-cycle during G(1)/S transition. Phosphorylation of RB1 allows dissociation of the transcription factor E2F from the RB/E2F complex and the subsequent transcription of E2F target genes which are responsible for the progression through the G(1) phase. Hypophosphorylates RB1 in early G(1) phase. Cyclin D-CDK4 complexes are major integrators of various mitogenenic and antimitogenic signals. This is G1/S-specific cyclin-D2 (Ccnd2) from Rattus norvegicus (Rat).